Reading from the N-terminus, the 396-residue chain is Putative F-box/kelch-repeat protein At3g17540 (396 aa).

The F-box domain maps to 4-50 (TMVISDLPHEIESEILSRVPTKSLAKLHTTCKRWYALFRDPRFVKKN). Kelch repeat units lie at residues 163–209 (LRYC…GMSL), 253–299 (VLSI…FLAV), and 338–386 (RIYI…KRKG).

The protein is Putative F-box/kelch-repeat protein At3g17540 of Arabidopsis thaliana (Mouse-ear cress).